We begin with the raw amino-acid sequence, 162 residues long: Endoribonuclease YbeY (162 aa).

Zn(2+) contacts are provided by His128, His132, and His138.

Belongs to the endoribonuclease YbeY family. It depends on Zn(2+) as a cofactor.

It is found in the cytoplasm. Functionally, single strand-specific metallo-endoribonuclease involved in late-stage 70S ribosome quality control and in maturation of the 3' terminus of the 16S rRNA. In Lactococcus lactis subsp. cremoris (strain MG1363), this protein is Endoribonuclease YbeY.